Here is a 463-residue protein sequence, read N- to C-terminus: Cysteine--tRNA ligase (463 aa).

Cys-28 contacts Zn(2+). A 'HIGH' region motif is present at residues 30 to 40; that stretch reads ITPYDLCHIGH. Zn(2+) contacts are provided by Cys-211, His-236, and Glu-240. The 'KMSKS' region motif lies at 268 to 272; sequence KMSKS. Lys-271 serves as a coordination point for ATP.

This sequence belongs to the class-I aminoacyl-tRNA synthetase family. As to quaternary structure, monomer. The cofactor is Zn(2+).

Its subcellular location is the cytoplasm. The catalysed reaction is tRNA(Cys) + L-cysteine + ATP = L-cysteinyl-tRNA(Cys) + AMP + diphosphate. The sequence is that of Cysteine--tRNA ligase from Wigglesworthia glossinidia brevipalpis.